The sequence spans 148 residues: Endoribonuclease YbeY (148 aa).

His-105, His-109, and Asp-115 together coordinate Zn(2+).

This sequence belongs to the endoribonuclease YbeY family. The cofactor is Zn(2+).

Its subcellular location is the cytoplasm. In terms of biological role, single strand-specific metallo-endoribonuclease involved in late-stage 70S ribosome quality control and in maturation of the 3' terminus of the 16S rRNA. This chain is Endoribonuclease YbeY, found in Chlorobium phaeovibrioides (strain DSM 265 / 1930) (Prosthecochloris vibrioformis (strain DSM 265)).